We begin with the raw amino-acid sequence, 88 residues long: Small ribosomal subunit protein bS21 (88 aa).

The segment at 58–88 is disordered; that stretch reads ARKRAQREGLLPMTPRPVAAGGAAGAARPPR. Low complexity predominate over residues 73-88; the sequence is RPVAAGGAAGAARPPR.

It belongs to the bacterial ribosomal protein bS21 family.

The protein is Small ribosomal subunit protein bS21 of Mesorhizobium japonicum (strain LMG 29417 / CECT 9101 / MAFF 303099) (Mesorhizobium loti (strain MAFF 303099)).